The sequence spans 528 residues: Glucans biosynthesis protein G 2 (528 aa).

The first 44 residues, 1–44, serve as a signal peptide directing secretion; that stretch reads MRLHLTFNHSTPATGRKNTKHTLFFGSMLACIISIISLVVPAYG.

This sequence belongs to the OpgD/OpgG family.

The protein localises to the periplasm. Its pathway is glycan metabolism; osmoregulated periplasmic glucan (OPG) biosynthesis. Functionally, involved in the biosynthesis of osmoregulated periplasmic glucans (OPGs). The chain is Glucans biosynthesis protein G 2 (opgG2) from Shewanella oneidensis (strain ATCC 700550 / JCM 31522 / CIP 106686 / LMG 19005 / NCIMB 14063 / MR-1).